The sequence spans 92 residues: Large ribosomal subunit protein bL27 (92 aa).

A propeptide spanning residues 1–8 (MLMNLQFF) is cleaved from the precursor. Residues 11-30 (HKGGGSTANGRDSAGRRLGA) form a disordered region.

This sequence belongs to the bacterial ribosomal protein bL27 family. In terms of processing, the N-terminus is cleaved by ribosomal processing cysteine protease Prp.

This is Large ribosomal subunit protein bL27 from Lactiplantibacillus plantarum (strain ATCC BAA-793 / NCIMB 8826 / WCFS1) (Lactobacillus plantarum).